The primary structure comprises 290 residues: Programmed cell death 1 ligand 1 (290 aa).

The first 18 residues, 1–18 (MRIFAGIIFTACCHLLRA), serve as a signal peptide directing secretion. One can recognise an Ig-like V-type domain in the interval 19–127 (FTITAPKDLY…YGGADYKRIT (109 aa)). At 19–239 (FTITAPKDLY…ATHPPQNRTH (221 aa)) the chain is on the extracellular side. A glycan (N-linked (GlcNAc...) asparagine) is linked at asparagine 35. 2 cysteine pairs are disulfide-bonded: cysteine 40/cysteine 114 and cysteine 154/cysteine 208. The Ig-like C2-type domain maps to 133-224 (PYRKINQRIS…PGQNHTAELI (92 aa)). N-linked (GlcNAc...) asparagine glycosylation is found at asparagine 191, asparagine 199, asparagine 218, and asparagine 236. The chain crosses the membrane as a helical span at residues 240–260 (WVLLGSILLFLIVVSTVLLFL). Over 261-290 (RKQVRMLDVEKCGVEDTSSKNRNDTQFEET) the chain is Cytoplasmic.

This sequence belongs to the immunoglobulin superfamily. BTN/MOG family. As to quaternary structure, interacts with PDCD1. Interacts with CMTM4 and CMTM6. Interacts with CD80. Post-translationally, ubiquitinated; STUB1 likely mediates polyubiquitination of PD-L1/CD274 triggering its degradation. Ubiquitinated by MARCHF8; leading to degradation. Deubiquitinated by USP22; leading to stabilization. In terms of tissue distribution, highly expressed in the heart, thymus, skeletal muscle, and lung. Weakly expressed in the kidney, spleen, thyroid, and liver. Expressed on activated dendritic cells, B-cells and macrophages. Expressed in numerous tumor cells lines of lymphoid origin.

It localises to the cell membrane. It is found in the early endosome membrane. Its subcellular location is the recycling endosome membrane. Plays a critical role in induction and maintenance of immune tolerance to self. As a ligand for the inhibitory receptor PDCD1/PD-1, modulates the activation threshold of T-cells and limits T-cell effector response. Through a yet unknown activating receptor, may costimulate T-cell subsets that predominantly produce interleukin-10 (IL10). Its function is as follows. The PDCD1-mediated inhibitory pathway is exploited by tumors to attenuate anti-tumor immunity and escape destruction by the immune system, thereby facilitating tumor survival. The interaction with PDCD1/PD-1 inhibits cytotoxic T lymphocytes (CTLs) effector function. The blockage of the PDCD1-mediated pathway results in the reversal of the exhausted T-cell phenotype and the normalization of the anti-tumor response, providing a rationale for cancer immunotherapy. The polypeptide is Programmed cell death 1 ligand 1 (Cd274) (Mus musculus (Mouse)).